Here is a 325-residue protein sequence, read N- to C-terminus: Large ribosomal subunit protein uL18 (325 aa).

The tract at residues 247 to 300 is disordered; it reads IRIPPSRRNPRRRSPRSGGRWPSCRSPPARRRSRSTRPTSWPRSRPTSKPKRPR. Low complexity-rich tracts occupy residues 262–273 and 282–291; these read RSGGRWPSCRSP and TRPTSWPRSR.

It belongs to the universal ribosomal protein uL18 family. As to quaternary structure, component of the large ribosomal subunit (LSU).

It is found in the cytoplasm. The protein localises to the nucleus. In terms of biological role, component of the ribosome, a large ribonucleoprotein complex responsible for the synthesis of proteins in the cell. The small ribosomal subunit (SSU) binds messenger RNAs (mRNAs) and translates the encoded message by selecting cognate aminoacyl-transfer RNA (tRNA) molecules. The large subunit (LSU) contains the ribosomal catalytic site termed the peptidyl transferase center (PTC), which catalyzes the formation of peptide bonds, thereby polymerizing the amino acids delivered by tRNAs into a polypeptide chain. The nascent polypeptides leave the ribosome through a tunnel in the LSU and interact with protein factors that function in enzymatic processing, targeting, and the membrane insertion of nascent chains at the exit of the ribosomal tunnel. This is Large ribosomal subunit protein uL18 (RpL5) from Anopheles gambiae (African malaria mosquito).